A 583-amino-acid polypeptide reads, in one-letter code: 2-succinyl-5-enolpyruvyl-6-hydroxy-3-cyclohexene-1-carboxylate synthase (583 aa).

It belongs to the TPP enzyme family. MenD subfamily. Homodimer. It depends on Mg(2+) as a cofactor. Requires Mn(2+) as cofactor. The cofactor is thiamine diphosphate.

The catalysed reaction is isochorismate + 2-oxoglutarate + H(+) = 5-enolpyruvoyl-6-hydroxy-2-succinyl-cyclohex-3-ene-1-carboxylate + CO2. The protein operates within quinol/quinone metabolism; 1,4-dihydroxy-2-naphthoate biosynthesis; 1,4-dihydroxy-2-naphthoate from chorismate: step 2/7. Its pathway is quinol/quinone metabolism; menaquinone biosynthesis. Functionally, catalyzes the thiamine diphosphate-dependent decarboxylation of 2-oxoglutarate and the subsequent addition of the resulting succinic semialdehyde-thiamine pyrophosphate anion to isochorismate to yield 2-succinyl-5-enolpyruvyl-6-hydroxy-3-cyclohexene-1-carboxylate (SEPHCHC). The chain is 2-succinyl-5-enolpyruvyl-6-hydroxy-3-cyclohexene-1-carboxylate synthase from Chlorobium chlorochromatii (strain CaD3).